Consider the following 312-residue polypeptide: Zinc transporter ZitB (312 aa).

Helical transmembrane passes span 16 to 36 (LLIA…GGWL), 40 to 60 (LALL…FIAL), 81 to 101 (LTTL…ILIV), 117 to 137 (TPML…FWIL), 153 to 173 (LHVL…IVIL), and 177 to 197 (WTPI…RSAW).

Belongs to the cation diffusion facilitator (CDF) transporter (TC 2.A.4) family. SLC30A subfamily.

Its subcellular location is the cell inner membrane. In terms of biological role, involved in zinc efflux across the cytoplasmic membrane, thus reducing zinc accumulation in the cytoplasm and rendering bacteria more resistant to zinc. It may contribute to zinc homeostasis at low concentrations of zinc. In Yersinia pestis, this protein is Zinc transporter ZitB.